A 568-amino-acid polypeptide reads, in one-letter code: 2-succinyl-5-enolpyruvyl-6-hydroxy-3-cyclohexene-1-carboxylate synthase (568 aa).

It belongs to the TPP enzyme family. MenD subfamily. In terms of assembly, homodimer. It depends on Mg(2+) as a cofactor. Mn(2+) serves as cofactor. Thiamine diphosphate is required as a cofactor.

It carries out the reaction isochorismate + 2-oxoglutarate + H(+) = 5-enolpyruvoyl-6-hydroxy-2-succinyl-cyclohex-3-ene-1-carboxylate + CO2. It participates in quinol/quinone metabolism; 1,4-dihydroxy-2-naphthoate biosynthesis; 1,4-dihydroxy-2-naphthoate from chorismate: step 2/7. Its pathway is quinol/quinone metabolism; menaquinone biosynthesis. Catalyzes the thiamine diphosphate-dependent decarboxylation of 2-oxoglutarate and the subsequent addition of the resulting succinic semialdehyde-thiamine pyrophosphate anion to isochorismate to yield 2-succinyl-5-enolpyruvyl-6-hydroxy-3-cyclohexene-1-carboxylate (SEPHCHC). The protein is 2-succinyl-5-enolpyruvyl-6-hydroxy-3-cyclohexene-1-carboxylate synthase of Haemophilus influenzae (strain 86-028NP).